Here is a 189-residue protein sequence, read N- to C-terminus: UPF0301 protein PLES_04031 (189 aa).

The protein belongs to the UPF0301 (AlgH) family.

The polypeptide is UPF0301 protein PLES_04031 (Pseudomonas aeruginosa (strain LESB58)).